Reading from the N-terminus, the 1158-residue chain is ATP-dependent helicase/deoxyribonuclease subunit B (1158 aa).

ATP is bound at residue 8 to 15 (GRAGTGKS). Positions 791, 1112, 1115, and 1121 each coordinate [4Fe-4S] cluster.

It belongs to the helicase family. AddB/RexB type 1 subfamily. As to quaternary structure, heterodimer of AddA and AddB. Mg(2+) serves as cofactor. Requires [4Fe-4S] cluster as cofactor.

Its function is as follows. The heterodimer acts as both an ATP-dependent DNA helicase and an ATP-dependent, dual-direction single-stranded exonuclease. Recognizes the chi site generating a DNA molecule suitable for the initiation of homologous recombination. The AddB subunit has 5' -&gt; 3' nuclease activity but not helicase activity. The chain is ATP-dependent helicase/deoxyribonuclease subunit B from Clostridium perfringens (strain ATCC 13124 / DSM 756 / JCM 1290 / NCIMB 6125 / NCTC 8237 / Type A).